A 132-amino-acid polypeptide reads, in one-letter code: Large ribosomal subunit protein bL17 (132 aa).

This sequence belongs to the bacterial ribosomal protein bL17 family. Part of the 50S ribosomal subunit. Contacts protein L32.

In Leptothrix cholodnii (strain ATCC 51168 / LMG 8142 / SP-6) (Leptothrix discophora (strain SP-6)), this protein is Large ribosomal subunit protein bL17.